We begin with the raw amino-acid sequence, 390 residues long: S-adenosylmethionine synthase 2 (390 aa).

A Mg(2+)-binding site is contributed by glutamate 9. Histidine 15 contributes to the ATP binding site. Glutamate 43 is a binding site for K(+). Positions 56 and 99 each coordinate L-methionine. Residues 167–169, 235–238, aspartate 246, 252–253, alanine 269, lysine 273, and lysine 277 each bind ATP; these read DGK, SGRF, and RK. Aspartate 246 is an L-methionine binding site. Lysine 277 serves as a coordination point for L-methionine.

Belongs to the AdoMet synthase family. In terms of assembly, homotetramer. The cofactor is Mn(2+). Mg(2+) is required as a cofactor. It depends on Co(2+) as a cofactor. Requires K(+) as cofactor.

The protein localises to the cytoplasm. It carries out the reaction L-methionine + ATP + H2O = S-adenosyl-L-methionine + phosphate + diphosphate. The protein operates within amino-acid biosynthesis; S-adenosyl-L-methionine biosynthesis; S-adenosyl-L-methionine from L-methionine: step 1/1. Functionally, catalyzes the formation of S-adenosylmethionine from methionine and ATP. The reaction comprises two steps that are both catalyzed by the same enzyme: formation of S-adenosylmethionine (AdoMet) and triphosphate, and subsequent hydrolysis of the triphosphate. This Nicotiana tabacum (Common tobacco) protein is S-adenosylmethionine synthase 2 (SAMS2).